A 402-amino-acid chain; its full sequence is Phosphoglycerate kinase (402 aa).

Substrate-binding positions include 21 to 23 (DLN), arginine 36, 59 to 62 (HLGR), arginine 114, and arginine 147. ATP-binding positions include lysine 202, glutamate 329, and 355-358 (GGDT).

It belongs to the phosphoglycerate kinase family. In terms of assembly, monomer.

The protein localises to the cytoplasm. The enzyme catalyses (2R)-3-phosphoglycerate + ATP = (2R)-3-phospho-glyceroyl phosphate + ADP. It functions in the pathway carbohydrate degradation; glycolysis; pyruvate from D-glyceraldehyde 3-phosphate: step 2/5. The protein is Phosphoglycerate kinase of Psychrobacter sp. (strain PRwf-1).